Reading from the N-terminus, the 401-residue chain is Protein IQ-DOMAIN 24 (401 aa).

Residues 1 to 48 (MGFFGRLFGSKKQEKATPNRRRWSFATRSSHPENDSSSHSSKRRGDED) form a disordered region. A calmodulin-binding region spans residues 105-121 (EYKAAMKIQSAFRGYLA). 2 IQ domains span residues 105–133 (EYKA…ALVK) and 134–156 (LQAL…RMQT). Low complexity-rich tracts occupy residues 165–176 (RASRSSHVSDSS) and 278–287 (RSRTGSSSGG). Disordered regions lie at residues 165–186 (RASR…IPSS) and 258–296 (SPRK…PFTP).

Belongs to the IQD family. As to quaternary structure, binds to multiple calmodulin (CaM) in the presence of Ca(2+) and CaM-like proteins.

The protein resides in the nucleus. It is found in the nuclear body. It localises to the cell membrane. In terms of biological role, may be involved in cooperative interactions with calmodulins or calmodulin-like proteins. Recruits calmodulin proteins to microtubules, thus being a potential scaffold in cellular signaling and trafficking. May associate with nucleic acids and regulate gene expression at the transcriptional or post-transcriptional level. The sequence is that of Protein IQ-DOMAIN 24 from Arabidopsis thaliana (Mouse-ear cress).